Reading from the N-terminus, the 179-residue chain is Large ribosomal subunit protein uL5 (179 aa).

It belongs to the universal ribosomal protein uL5 family. Part of the 50S ribosomal subunit; part of the 5S rRNA/L5/L18/L25 subcomplex. Contacts the 5S rRNA and the P site tRNA. Forms a bridge to the 30S subunit in the 70S ribosome.

Functionally, this is one of the proteins that bind and probably mediate the attachment of the 5S RNA into the large ribosomal subunit, where it forms part of the central protuberance. In the 70S ribosome it contacts protein S13 of the 30S subunit (bridge B1b), connecting the 2 subunits; this bridge is implicated in subunit movement. Contacts the P site tRNA; the 5S rRNA and some of its associated proteins might help stabilize positioning of ribosome-bound tRNAs. This Oceanobacillus iheyensis (strain DSM 14371 / CIP 107618 / JCM 11309 / KCTC 3954 / HTE831) protein is Large ribosomal subunit protein uL5.